Here is a 239-residue protein sequence, read N- to C-terminus: Probable transcriptional regulatory protein lin0388 (239 aa).

The protein belongs to the TACO1 family. YeeN subfamily.

The protein localises to the cytoplasm. The polypeptide is Probable transcriptional regulatory protein lin0388 (Listeria innocua serovar 6a (strain ATCC BAA-680 / CLIP 11262)).